We begin with the raw amino-acid sequence, 317 residues long: Melanocyte-stimulating hormone receptor (317 aa).

Residues 1–23 (MSGQGPQRRLLGSPNATSPTTPH) form a disordered region. Over 1-37 (MSGQGPQRRLLGSPNATSPTTPHFKLAANQTGPRCLE) the chain is Extracellular. Asn29 carries an N-linked (GlcNAc...) asparagine glycan. The chain crosses the membrane as a helical span at residues 38–63 (VSIPNGLFLSLGLVSVVENVLVVAAI). The Cytoplasmic segment spans residues 64–72 (AKNRNLHSP). The helical transmembrane segment at 73–93 (MYYFIGCLAVSDLLVSVTNVL) threads the bilayer. At 94–118 (ETAVMLLVEAGALAAQAAVVQQLDD) the chain is on the extracellular side. Residues 119 to 140 (IIDVLICGSMVSSLCFLGAIAV) form a helical membrane-spanning segment. The Cytoplasmic portion of the chain corresponds to 141–163 (DRYLSIFYALRYHSIVTLPRAWR). Residues 164 to 183 (AISAIWVASVLSSTLFIAYY) traverse the membrane as a helical segment. Over 184-191 (NHTAVLLC) the chain is Extracellular. A helical membrane pass occupies residues 192–211 (LVSFFVAMLVLMAVLYVHML). Over 212 to 240 (ARARQHARGIARLRKRQHSVHQGFGLKGA) the chain is Cytoplasmic. The helical transmembrane segment at 241 to 266 (ATLTILLGIFFLCWGPFFLHLSLMVL) threads the bilayer. The Extracellular segment spans residues 267 to 279 (CPQHPICGCVFQN). A helical transmembrane segment spans residues 280–300 (FNLFLTLIICNSIIDPFIYAF). The Cytoplasmic segment spans residues 301–317 (RSQELRKTLQEVVLCSW). A lipid anchor (S-palmitoyl cysteine) is attached at Cys315.

This sequence belongs to the G-protein coupled receptor 1 family. Interacts with MGRN1, but does not undergo MGRN1-mediated ubiquitination; this interaction competes with GNAS-binding and thus inhibits agonist-induced cAMP production. Interacts with OPN3; the interaction results in a decrease in MC1R-mediated cAMP signaling and ultimately a decrease in melanin production in melanocytes.

Its subcellular location is the cell membrane. Receptor for MSH (alpha, beta and gamma) and ACTH. The activity of this receptor is mediated by G proteins which activate adenylate cyclase. Mediates melanogenesis, the production of eumelanin (black/brown) and phaeomelanin (red/yellow), via regulation of cAMP signaling in melanocytes. This Vulpes vulpes (Red fox) protein is Melanocyte-stimulating hormone receptor (MC1R).